The primary structure comprises 361 residues: uncharacterized protein (361 aa).

This is an uncharacterized protein from Methanothermobacter thermautotrophicus (Methanobacterium thermoformicicum).